Reading from the N-terminus, the 490-residue chain is Gallate decarboxylase (490 aa).

Residue aspartate 165 participates in Mn(2+) binding. Prenylated FMN-binding positions include 168-170 (IHR) and glycine 187. Glutamate 233 is a binding site for Mn(2+). The active-site Proton acceptor is glutamate 289.

The protein belongs to the UbiD family. Requires prenylated FMN as cofactor. It depends on Mn(2+) as a cofactor.

The catalysed reaction is 3,4,5-trihydroxybenzoate + H(+) = 1,2,3-trihydroxybenzene + CO2. It catalyses the reaction 3,4-dihydroxybenzoate + H(+) = catechol + CO2. Involved in tannin degradation. Catalyzes the decarboxylation of gallic acid and protocatechuic acid to pyrogallol and catechol, respectively. The polypeptide is Gallate decarboxylase (Lactiplantibacillus plantarum (strain ATCC BAA-793 / NCIMB 8826 / WCFS1) (Lactobacillus plantarum)).